A 328-amino-acid chain; its full sequence is Ankyrin repeat domain-containing protein 2 (328 aa).

The residue at position 36 (S36) is a Phosphoserine. S68 carries the post-translational modification Phosphoserine; by PKB/AKT2. Residues 96 to 116 are disordered; that stretch reads RDALAAAQEPPPEPEEITGPV. 5 ANK repeats span residues 116–145, 149–178, 182–211, 215–244, and 248–277; these read VNEE…SADT, FRRT…TVDF, LDCT…DTNV, LLST…DINA, and EGDS…DMMA. Positions 297–328 are disordered; sequence RHALEHPEPESEQNGLERPGSGRETPQPIPAQ.

In terms of assembly, interacts with ID3; both proteins cooperate in myoblast differentiation. Interacts with TTN/titin. Interacts (via ANK repeats) with TCAP; the interaction is direct. Interacts with TJP1 (via PDZ domains). Interacts with PML; the interaction is direct. Interacts with p53/TP53. Interacts with YBX1. Interacts with AKT2. Post-translationally, phosphorylation at Ser-68 by PKB/AKT2 in response to oxidative stress induces translocation to the nucleus and negatively regulates myoblast differentiation. In terms of tissue distribution, expressed by myoblasts (at protein level). Expressed in skeletal and cardiac muscles.

The protein localises to the cytoplasm. Its subcellular location is the myofibril. The protein resides in the sarcomere. It is found in the i band. It localises to the cytosol. The protein localises to the nucleus. Its subcellular location is the PML body. Its function is as follows. Functions as a negative regulator of myocyte differentiation. May interact with both sarcoplasmic structural proteins and nuclear proteins to regulate gene expression during muscle development and in response to muscle stress. In Mus musculus (Mouse), this protein is Ankyrin repeat domain-containing protein 2 (Ankrd2).